Here is a 333-residue protein sequence, read N- to C-terminus: Uroporphyrinogen decarboxylase (333 aa).

Substrate is bound by residues 22 to 26, Asp71, Tyr145, Ser200, and His310; that span reads RQAGR.

It belongs to the uroporphyrinogen decarboxylase family. In terms of assembly, homodimer.

Its subcellular location is the cytoplasm. It catalyses the reaction uroporphyrinogen III + 4 H(+) = coproporphyrinogen III + 4 CO2. It functions in the pathway porphyrin-containing compound metabolism; protoporphyrin-IX biosynthesis; coproporphyrinogen-III from 5-aminolevulinate: step 4/4. Catalyzes the decarboxylation of four acetate groups of uroporphyrinogen-III to yield coproporphyrinogen-III. In Thermoplasma acidophilum (strain ATCC 25905 / DSM 1728 / JCM 9062 / NBRC 15155 / AMRC-C165), this protein is Uroporphyrinogen decarboxylase.